Reading from the N-terminus, the 231-residue chain is Cytochrome c oxidase assembly factor 7 (231 aa).

Residue Ala2 is modified to N-acetylalanine. Sel1-like repeat units lie at residues 34–66, 68–104, 108–146, 147–183, and 184–219; these read PDGC…EENQ, SDSC…EKPG, IAAC…DGGY, TSSC…DLGH, and IWAC…QLHK.

Belongs to the hcp beta-lactamase family. In terms of assembly, interacts with CHCHD4/MIA40 through transient intermolecular disulfide bonds.

The protein localises to the mitochondrion intermembrane space. Its function is as follows. Required for assembly of mitochondrial respiratory chain complex I and complex IV. The protein is Cytochrome c oxidase assembly factor 7 (COA7) of Homo sapiens (Human).